A 509-amino-acid chain; its full sequence is Cytochrome P450 monooxygenase LUC2 (509 aa).

Residues 30 to 50 traverse the membrane as a helical segment; sequence TKVLVTFLTIVIIAPRVFTVI. Residue cysteine 456 coordinates heme.

Belongs to the cytochrome P450 family. It depends on heme as a cofactor.

It is found in the membrane. Its pathway is mycotoxin biosynthesis. Functionally, cytochrome P450 monooxygenase; part of the gene cluster that mediates the biosynthesis of the mycotoxin lucilactaene and the lucilactaene-related compound NG-391 that act as cell cycle inhibitors with potent growth inhibitory activity against malarial parasites, moderate growth inhibitory activity against cancer cells, and no activity against bacteria and fungi. Within the pathway, LUC2 performs C-20 methyl group hydroxylation of several intermediates. LUC2 does not perform the full oxidation of the C-20 methyl group into carboxylic acid, which is a prerequisite for the final methylation step. The pathway begins with the hybrid PKS-NRPS synthetase LUC5 which is responsible for the condensation of one acetyl-coenzyme A (CoA) unit with six malonyl-CoA units and the amide linkage of the arising heptaketide and homoserine, subsequently releasing the first intermediate prelucilactaene B. Both the cytochrome P450 monooxygenase LUC2 and the hydrolase LUC6 function in parallel in modification of prelucilactaene B. LUC6 may catalyze the 2-pyrrolidone ring formation to form prelucilactaene C from prelucilactaene B, followed by C-15 hydroxylation by the same enzyme to give prelucilactaene D, which is then converted to prelucilactaene E by epoxidation, and finally to prelucilactaene F by cyclization. Prelucilactane D, prelucilactaene E, and prelucilactaene F can be converted to dihydrolucilactaene, NG391, and lucilactaene, respectively, via C-20 methyl group hydroxylation by the cytochrome P450 monooxygenase LUC2. However, LUC2, unlike FUS8 in fusarin C biosynthesis, is not enough for the full oxidation of the C-20 methyl group into carboxylic acid, which is a prerequisite for the final methylation step. The aldehyde dehydrogenase LUC3 is involved in the biosynthesis by further oxidation of the C-20 alcoholic analog prelucilactaene G into a carboxylic derivative. This unidentified carboxylic derivative may be converted to demethyllucilactaene. As the last step, the methyltransferase LUC1 methylates the hydroxyl group at C-21 of demethyllucilactaene to generate lucilactaene. The sequence is that of Cytochrome P450 monooxygenase LUC2 from Fusarium sp.